Consider the following 340-residue polypeptide: GTP 3',8-cyclase (340 aa).

The Radical SAM core domain maps to lysine 8 to glutamate 230. Arginine 17 is a binding site for GTP. [4Fe-4S] cluster is bound by residues cysteine 24 and cysteine 28. Tyrosine 30 is an S-adenosyl-L-methionine binding site. Cysteine 31 lines the [4Fe-4S] cluster pocket. A GTP-binding site is contributed by arginine 71. Glycine 75 serves as a coordination point for S-adenosyl-L-methionine. Threonine 102 lines the GTP pocket. An S-adenosyl-L-methionine-binding site is contributed by serine 126. GTP is bound at residue lysine 163. S-adenosyl-L-methionine is bound at residue methionine 197. 2 residues coordinate [4Fe-4S] cluster: cysteine 261 and cysteine 264. Arginine 266–arginine 268 lines the GTP pocket. Cysteine 278 contributes to the [4Fe-4S] cluster binding site.

This sequence belongs to the radical SAM superfamily. MoaA family. In terms of assembly, monomer and homodimer. [4Fe-4S] cluster is required as a cofactor.

The enzyme catalyses GTP + AH2 + S-adenosyl-L-methionine = (8S)-3',8-cyclo-7,8-dihydroguanosine 5'-triphosphate + 5'-deoxyadenosine + L-methionine + A + H(+). It functions in the pathway cofactor biosynthesis; molybdopterin biosynthesis. In terms of biological role, catalyzes the cyclization of GTP to (8S)-3',8-cyclo-7,8-dihydroguanosine 5'-triphosphate. This chain is GTP 3',8-cyclase, found in Staphylococcus aureus (strain bovine RF122 / ET3-1).